A 58-amino-acid chain; its full sequence is Large ribosomal subunit protein eL24 (58 aa).

Residues cysteine 6, cysteine 9, cysteine 32, and cysteine 36 each coordinate Zn(2+). The C4-type zinc-finger motif lies at 6–36 (CSFCGAEIPPGYGIMYVRNDGTIQRYCSRKC).

Belongs to the eukaryotic ribosomal protein eL24 family. Part of the 50S ribosomal subunit. Forms a cluster with proteins L3 and L14. Zn(2+) serves as cofactor.

Binds to the 23S rRNA. The chain is Large ribosomal subunit protein eL24 from Pyrobaculum neutrophilum (strain DSM 2338 / JCM 9278 / NBRC 100436 / V24Sta) (Thermoproteus neutrophilus).